A 376-amino-acid chain; its full sequence is NIF3-like protein 1 (376 aa).

N6-acetyllysine is present on Lys-108. The tract at residues 243–376 (LLLHTGMGRL…ETDRDPLRVV (134 aa)) is mediates interaction with COPS2. Thr-254 is modified (phosphothreonine). Ser-258 bears the Phosphoserine mark.

It belongs to the GTP cyclohydrolase I type 2/NIF3 family. In terms of assembly, homodimer. Interacts with COPS2. Interacts with THOC7. In terms of tissue distribution, ubiquitous. Detected in all tissues tested with higher expression in cerebellum, heart and kidney and to a lower level in cerebrum, lung, liver, spleen and muscle.

The protein resides in the cytoplasm. It is found in the nucleus. May function as a transcriptional corepressor through its interaction with COPS2, negatively regulating the expression of genes involved in neuronal differentiation. The polypeptide is NIF3-like protein 1 (Mus musculus (Mouse)).